Consider the following 202-residue polypeptide: FMN-dependent NADH:quinone oxidoreductase (202 aa).

FMN contacts are provided by residues Ser-10 and 95-98 (MYNF).

This sequence belongs to the azoreductase type 1 family. As to quaternary structure, homodimer. It depends on FMN as a cofactor.

It carries out the reaction 2 a quinone + NADH + H(+) = 2 a 1,4-benzosemiquinone + NAD(+). The catalysed reaction is N,N-dimethyl-1,4-phenylenediamine + anthranilate + 2 NAD(+) = 2-(4-dimethylaminophenyl)diazenylbenzoate + 2 NADH + 2 H(+). Its function is as follows. Quinone reductase that provides resistance to thiol-specific stress caused by electrophilic quinones. Also exhibits azoreductase activity. Catalyzes the reductive cleavage of the azo bond in aromatic azo compounds to the corresponding amines. This chain is FMN-dependent NADH:quinone oxidoreductase, found in Pseudoalteromonas atlantica (strain T6c / ATCC BAA-1087).